The chain runs to 1139 residues: MTIVYDVTGHKGGGGKQHTPQETPDSLHSLAKIRILLALGEGEFEGITSASELRQRVYLDGTPIQNADLSENFPGARVEFRPGTQHQDVIHGFSAVESEQSVGVKLENGTPWVRQINDTSLDAVRVRIGIPALYTSEDNGDLVGGRIDYKIVVYTDNADPREFTFAAVGKTMSLYERDHRIELPPNVNTGWRVEVHRITADSTSAKVVNDIQVQSITEIIDARLRYPLTALLFVEFDAKAFQNIPRVSIKCKGRKVLIPNNYDPINHTYSGDWDGTFKRAWSDNPAWHWYDICITERFGLGRRIKPQMLNRYALYQIAQRCDQLVSDGNGGREIRFKNDMYIQSQTDAWTVLKDLAAIFAGMTWWGNQMLNIVSDQPVAAVSHTITNASVIDGRFDYASGSQKTRYSTFAVAYGNPKNHYDDAIATGQRVELVRRHKINRLDITAIGCTRESEAQRRGHWALISNQLDQQVSFKVGMEGLFFIPGSVVAIADTNISGGFETRGGRLLSDPGTRTVLNTDSEITFRPGDKFLVRTDSGNVETREIASVNGNKVTLKTALDADPIPDQPFCVDGDDIQLQKFRITDLEYDDSTSTFSVRGIEYNDSKYDAVDNGARLDPGIFTQVPDGVMKGPESVTITPSQISSQGQLITNVDIVFPPVKDAVVYEIQWRRTSLQNMAVQWGNDWVNIPRTASNGAHIPNVFSGNYQARVRAIGMGEISSPWVSSAITPVEGRLGGLNAPIITNAISGLHQILWKWNHNNAATDISYTELEVRKTGETEWKFLTNVPYPGAEYAQTSLEFGIYQQLRARVADKIGNLSDWSAPFEGQVSDKVDEYMKGLDDEFLTSEDGKRFQEAIDTVPQGIYEAMLTDAQQLFNARAEYKGIYAEIKVAYNVAADAHKAVAQLETLIGTRLDDAEAAIHTLQTAQSTQEQAFAQYQQTVAAKFSEQEAAIQQVQTATADVAGALAEYKTQVAAQFGQQSAAIEQKMTSSFNHAGGSATYSLKAGVTYNGTYYDAGMQLSVVTEGDAVKSSIAFKADQFYIMHPSNGSLSSAFIVDGGAVYIDTARIKDATINFAQITDTLQSNNYDGDTRGWRLGKDGTFINLGTGNGGGMKQTNTQISVKDGNGVLRVQIGEITGSW.

Belongs to the Caudoviricetes tip attachment protein J family. Ubiquitinated by the Bil antiviral defense system when the Bil system is expressed in E.coli MG1655 and infected with this virus, or when this protein is expressed in a strain with the Bil system.

The protein localises to the virion. The protein resides in the host cytoplasm. In terms of biological role, attaches the virion to the host receptor, inducing viral DNA ejection. During tail assembly, initiates distal tail tip assembly. During virus entry to host cell, binds strongly to host receptor in an irreversible attachment. The binding induces structural changes in the tail leading to viral DNA injection. This is Tip attachment protein J from Escherichia phage SECphi4.